Here is a 189-residue protein sequence, read N- to C-terminus: MEIKKLEAMIEAILFTMGEAVEVERIASALDHDVDTIRKIIHNMMDRYEGDERGIKIIELDNSFQMCTKAQMYEAIVKIAHVPKKHILTDVLLESLSIIAYKQPITKQQIESIRGVKSDHAVNKLVEYNLVCEVGRMDAPGRPILFGTTEDFLRNFGIASLEDLPVVAPEKVADFKMEAEEEVQLQLDI.

The protein belongs to the ScpB family. Homodimer. Homodimerization may be required to stabilize the binding of ScpA to the Smc head domains. Component of a cohesin-like complex composed of ScpA, ScpB and the Smc homodimer, in which ScpA and ScpB bind to the head domain of Smc. The presence of the three proteins is required for the association of the complex with DNA.

The protein localises to the cytoplasm. Participates in chromosomal partition during cell division. May act via the formation of a condensin-like complex containing Smc and ScpA that pull DNA away from mid-cell into both cell halves. This is Segregation and condensation protein B from Lachnoclostridium phytofermentans (strain ATCC 700394 / DSM 18823 / ISDg) (Clostridium phytofermentans).